We begin with the raw amino-acid sequence, 622 residues long: Elongation factor 4 (622 aa).

The tr-type G domain maps to 17 to 201 (ALIRNFCIIA…KVVAEVPAPV (185 aa)). GTP contacts are provided by residues 29–34 (DHGKST) and 148–151 (NKID).

Belongs to the TRAFAC class translation factor GTPase superfamily. Classic translation factor GTPase family. LepA subfamily.

It localises to the cell membrane. The enzyme catalyses GTP + H2O = GDP + phosphate + H(+). In terms of biological role, required for accurate and efficient protein synthesis under certain stress conditions. May act as a fidelity factor of the translation reaction, by catalyzing a one-codon backward translocation of tRNAs on improperly translocated ribosomes. Back-translocation proceeds from a post-translocation (POST) complex to a pre-translocation (PRE) complex, thus giving elongation factor G a second chance to translocate the tRNAs correctly. Binds to ribosomes in a GTP-dependent manner. This is Elongation factor 4 from Streptomyces coelicolor (strain ATCC BAA-471 / A3(2) / M145).